The chain runs to 445 residues: 23S rRNA (uracil(1939)-C(5))-methyltransferase RlmD (445 aa).

The TRAM domain maps to 6-64 (RRLPREPFEIAITGLSHEGRGIAHHDERTLFVHGALPGERVRAVYTKRRRSVAEARVVE). [4Fe-4S] cluster is bound by residues cysteine 77, cysteine 83, cysteine 86, and cysteine 165. S-adenosyl-L-methionine is bound by residues glutamine 274, phenylalanine 303, asparagine 308, glutamate 324, aspartate 351, and aspartate 372. The active-site Nucleophile is cysteine 398.

It belongs to the class I-like SAM-binding methyltransferase superfamily. RNA M5U methyltransferase family. RlmD subfamily.

The enzyme catalyses uridine(1939) in 23S rRNA + S-adenosyl-L-methionine = 5-methyluridine(1939) in 23S rRNA + S-adenosyl-L-homocysteine + H(+). Functionally, catalyzes the formation of 5-methyl-uridine at position 1939 (m5U1939) in 23S rRNA. The sequence is that of 23S rRNA (uracil(1939)-C(5))-methyltransferase RlmD from Alkalilimnicola ehrlichii (strain ATCC BAA-1101 / DSM 17681 / MLHE-1).